Here is a 561-residue protein sequence, read N- to C-terminus: Rho guanine nucleotide exchange factor 9 (561 aa).

The region spanning 53–112 is the SH3 domain; sequence DSIVSAEAVWDHVTMANRELAFKAGDVIKVLDASNKDWWWGQIDDEEGWFPASFVRLWVN. Residues 145-155 form an interaction with GPHN region; sequence RDQMRANVINE. Residues 148 to 332 form the DH domain; sequence MRANVINEIM…RNVTQQINER (185 aa). The PH domain occupies 363–470; it reads ELIYTGEMAW…WLRAFREERK (108 aa). Positions 499–524 are disordered; that stretch reads KQKGVNSARSVPPSYPPPQDPLNQGQ. Residue serine 547 is modified to Phosphoserine.

As to quaternary structure, interacts with GPHN.

The protein localises to the cytoplasm. It localises to the postsynaptic density. Acts as a guanine nucleotide exchange factor (GEF) for CDC42. Promotes formation of GPHN clusters. The chain is Rho guanine nucleotide exchange factor 9 (ARHGEF9) from Bos taurus (Bovine).